The following is a 144-amino-acid chain: Large ribosomal subunit protein uL11 (144 aa).

Belongs to the universal ribosomal protein uL11 family. As to quaternary structure, part of the ribosomal stalk of the 50S ribosomal subunit. Interacts with L10 and the large rRNA to form the base of the stalk. L10 forms an elongated spine to which L12 dimers bind in a sequential fashion forming a multimeric L10(L12)X complex. In terms of processing, one or more lysine residues are methylated.

Its function is as follows. Forms part of the ribosomal stalk which helps the ribosome interact with GTP-bound translation factors. In Legionella pneumophila (strain Paris), this protein is Large ribosomal subunit protein uL11.